Here is a 198-residue protein sequence, read N- to C-terminus: Ribonuclease HII (198 aa).

The region spanning 10-198 is the RNase H type-2 domain; that stretch reads HLVAGVDEVG…PVKRALGLVS (189 aa). A divalent metal cation contacts are provided by Asp16, Glu17, and Asp108.

Belongs to the RNase HII family. Mn(2+) serves as cofactor. Requires Mg(2+) as cofactor.

Its subcellular location is the cytoplasm. The enzyme catalyses Endonucleolytic cleavage to 5'-phosphomonoester.. Its function is as follows. Endonuclease that specifically degrades the RNA of RNA-DNA hybrids. In Salmonella schwarzengrund (strain CVM19633), this protein is Ribonuclease HII.